The following is a 347-amino-acid chain: Large ribosomal subunit protein uL10 (347 aa).

Residues 312–347 form a disordered region; that stretch reads AAAPAEEEVKKEEEPEEEEEDHAEEDGMAGLGALFG. Over residues 325 to 338 the composition is skewed to acidic residues; sequence EPEEEEEDHAEEDG.

It belongs to the universal ribosomal protein uL10 family. In terms of assembly, part of the 50S ribosomal subunit. Forms part of the ribosomal stalk which helps the ribosome interact with GTP-bound translation factors. Forms a heptameric L10(L12)2(L12)2(L12)2 complex, where L10 forms an elongated spine to which the L12 dimers bind in a sequential fashion.

Its function is as follows. Forms part of the ribosomal stalk, playing a central role in the interaction of the ribosome with GTP-bound translation factors. The sequence is that of Large ribosomal subunit protein uL10 from Methanosarcina acetivorans (strain ATCC 35395 / DSM 2834 / JCM 12185 / C2A).